The sequence spans 678 residues: F-box/LRR-repeat protein 5 (678 aa).

The hemerythrin-like stretch occupies residues 1-159 (MAPFPDEVDL…IKKKVIAQHC (159 aa)). Fe(3+) contacts are provided by H15, H57, E58, E61, H80, H126, and E130. Residues 202–248 (SSSISSLPPEVMLNIFTYLNPQDLCRCSQVNTEWAQLAKTGSLWRHL) form the F-box domain. Residues 285–308 (YQEWDEDADIDESEETGEEEDSSI) are disordered. Acidic residues predominate over residues 287 to 306 (EWDEDADIDESEETGEEEDS). LRR repeat units follow at residues 314–340 (EKEL…VLAY), 341–366 (SSAT…DLTQ), 367–392 (TDIS…DLSG), 393–420 (CDKI…RLLK), 566–594 (HSDI…SLSG), 595–622 (CHQI…NLSG), and 623–648 (CLNV…HFYY). The [2Fe-2S] cluster site is built by C649, C663, C673, and C674. Residues 655–678 (PHGATASGCQNLQCGFRMCCRSGE) form an LRR 8 repeat.

In terms of assembly, part of a SCF (SKP1-cullin-F-box) protein ligase complex. Requires [2Fe-2S] cluster as cofactor. Ubiquitinated upon iron and oxygen depletion, leading to its degradation by the proteasome. Ubiquitination is regulated by the hemerythrin-like region that acts as an oxygen and iron sensor.

It localises to the cytoplasm. The protein localises to the perinuclear region. Its subcellular location is the nucleus. It participates in protein modification; protein ubiquitination. Component of some SCF (SKP1-cullin-F-box) protein ligase complex that plays a central role in iron homeostasis by promoting the ubiquitination and subsequent degradation of ireb2/irp2. Upon high iron and oxygen level, it specifically recognizes and binds ireb2/irp2, promoting its ubiquitination and degradation by the proteasome. The protein is F-box/LRR-repeat protein 5 (fbxl5) of Xenopus laevis (African clawed frog).